The sequence spans 654 residues: Pentatricopeptide repeat-containing protein At5g61400 (654 aa).

16 PPR repeats span residues 37 to 71 (SSFS…RVSK), 74 to 104 (DLQS…LIER), 131 to 161 (SIGV…MKCS), 163 to 197 (DSKA…GLVP), 198 to 232 (DVHI…GIKP), 233 to 267 (NVYI…GVLP), 268 to 302 (NLYT…ELLP), 303 to 337 (NVVV…GVDP), 338 to 372 (NLYV…NLSP), 373 to 407 (DVFT…RIFP), 408 to 442 (SSAT…GVEP), 443 to 477 (NIIT…GIVP), 478 to 512 (DVVT…GIHP), 513 to 543 (NDHT…NNQQ), 548 to 582 (NHVG…GITP), and 583 to 617 (DICS…GILP).

Belongs to the PPR family. P subfamily.

The polypeptide is Pentatricopeptide repeat-containing protein At5g61400 (Arabidopsis thaliana (Mouse-ear cress)).